We begin with the raw amino-acid sequence, 380 residues long: MTIMRKKHPLLKMINHSFIDLPTPSNISSWWNFGSLLGMCLMIQILTGLFLAMHYTSDTTTAFSSVAHICRDVNYGWLIRYLHANGASMFFICLFIHVGRGIYYGSYMLLETWNIGIVLLLTTMATAFVGYVLPWGQMSFWGATVITNLLSAIPYXGNTLVEWIWGGFSVDKATLTRFFAFHFILPFIITALVLVHLLFLHETGSNNPSGLDSNSDKIPFHPYYTIKDLLGALILLMVLMILVLFFPDVLGDPDNYTPANPLNTPAHIKPEWYFLFAYAILRSIPNKLGGVLALILSILILATLPLLNSSKQHGLIYRPITQALYWIFVANLLTXTWIGGQPVEXPFTLIGXIASXLXFXIIIIFMPIASTIXNNIPXLH.

Helical transmembrane passes span 33–53 (FGSL…FLAM), 77–98 (WLIR…FIHV), 113–133 (WNIG…GYVL), and 178–198 (FFAF…VHLL). Heme b is bound by residues His83 and His97. Residues His182 and His196 each contribute to the heme b site. His201 lines the a ubiquinone pocket. 4 helical membrane-spanning segments follow: residues 226 to 246 (IKDL…VLFF), 288 to 308 (LGGV…PLLN), 320 to 340 (ITQA…WIGG), and 347 to 367 (FTLI…IFMP).

The protein belongs to the cytochrome b family. In terms of assembly, the cytochrome bc1 complex contains 11 subunits: 3 respiratory subunits (MT-CYB, CYC1 and UQCRFS1), 2 core proteins (UQCRC1 and UQCRC2) and 6 low-molecular weight proteins (UQCRH/QCR6, UQCRB/QCR7, UQCRQ/QCR8, UQCR10/QCR9, UQCR11/QCR10 and a cleavage product of UQCRFS1). This cytochrome bc1 complex then forms a dimer. Heme b serves as cofactor.

The protein resides in the mitochondrion inner membrane. Its function is as follows. Component of the ubiquinol-cytochrome c reductase complex (complex III or cytochrome b-c1 complex) that is part of the mitochondrial respiratory chain. The b-c1 complex mediates electron transfer from ubiquinol to cytochrome c. Contributes to the generation of a proton gradient across the mitochondrial membrane that is then used for ATP synthesis. This Rhipidomys wetzeli (Wetzel's climbing mouse) protein is Cytochrome b (MT-CYB).